The chain runs to 249 residues: Elsinochromes biosynthesis cluster protein HP3 (249 aa).

Asn-106 carries N-linked (GlcNAc...) asparagine glycosylation. A helical membrane pass occupies residues 138–158; that stretch reads VVFAFMLSAWLVWLITVYAFA.

The protein resides in the membrane. Functionally, part of the gene cluster that mediates the biosynthesis of elsinochromes, pigments consisting of at least four interconvertible tautomers (A, B, C and D) that have a core phenolic quinone to which various side chains are attached and which play an important role in fungal pathogenesis. The non-reducing polyketide synthase PKS1 was proposed to iteratively catalyze decarboxylation between acetyl-CoA and malonyl-CoA subunits for polyketide chain elongation. The released polyketide undergoes cyclization to form an aromatic ring, and proceeds via serial modification steps to produce the heptaketide back- bone of elsinochrome. As elsinochrome has a symmetrical structure, two identical heptaketides are fused to form a core 1,2-dihydrobenzo-perylene ring structure, which can then be successively modified to produce the various derivatives of elsinochrome. Some of these reactions may be cooperatively carried out, at least in part, by the products of RDT1, OXR1 and PKS1. PRF1, embedded within the elsinochrome cluster possibly functions to stabilize some of the biosynthetic enzymes required for elsinochrome production. As prefoldin is a hexamer containing 2 a and 4 b subunits, additional prefoldin subunits, whose coding genes may not immediately link to the elsinochrome biosynthetic gene cluster, are required to fulfill the chaperone function. In addition, no methyltransferase-coding gene exists within the biosynthetic gene cluster, even though elsinochrome has four methyl groups at positions C3, C7, C8 and C12. Apparently, the identified gene cluster does not contain the entire entourage of genes responsible for elsinochrome biosynthesis. Once elsinochrome is synthesized, it must be exported outside the fungal cells, which is probably accomplished by the ECT1 transporter, to avoid toxicity. The protein is Elsinochromes biosynthesis cluster protein HP3 of Elsinoe fawcettii (Citrus scab fungus).